The sequence spans 276 residues: NADPH-dependent 7-cyano-7-deazaguanine reductase (276 aa).

Residue 83-85 (IES) coordinates substrate. 85-86 (SK) lines the NADPH pocket. The active-site Thioimide intermediate is C184. The active-site Proton donor is D191. 223-224 (HE) contacts substrate. Residue 252–253 (RG) coordinates NADPH.

The protein belongs to the GTP cyclohydrolase I family. QueF type 2 subfamily. Homodimer.

It localises to the cytoplasm. The catalysed reaction is 7-aminomethyl-7-carbaguanine + 2 NADP(+) = 7-cyano-7-deazaguanine + 2 NADPH + 3 H(+). It functions in the pathway tRNA modification; tRNA-queuosine biosynthesis. In terms of biological role, catalyzes the NADPH-dependent reduction of 7-cyano-7-deazaguanine (preQ0) to 7-aminomethyl-7-deazaguanine (preQ1). The polypeptide is NADPH-dependent 7-cyano-7-deazaguanine reductase (Pseudomonas aeruginosa (strain ATCC 15692 / DSM 22644 / CIP 104116 / JCM 14847 / LMG 12228 / 1C / PRS 101 / PAO1)).